Here is a 489-residue protein sequence, read N- to C-terminus: Glycogen synthase (489 aa).

Lys-18 serves as a coordination point for ADP-alpha-D-glucose.

Belongs to the glycosyltransferase 1 family. Bacterial/plant glycogen synthase subfamily.

It catalyses the reaction [(1-&gt;4)-alpha-D-glucosyl](n) + ADP-alpha-D-glucose = [(1-&gt;4)-alpha-D-glucosyl](n+1) + ADP + H(+). The protein operates within glycan biosynthesis; glycogen biosynthesis. Functionally, synthesizes alpha-1,4-glucan chains using ADP-glucose. The sequence is that of Glycogen synthase from Rhodopseudomonas palustris (strain BisA53).